Consider the following 294-residue polypeptide: ATP synthase gamma chain (294 aa).

Belongs to the ATPase gamma chain family. As to quaternary structure, F-type ATPases have 2 components, CF(1) - the catalytic core - and CF(0) - the membrane proton channel. CF(1) has five subunits: alpha(3), beta(3), gamma(1), delta(1), epsilon(1). CF(0) has three main subunits: a, b and c.

It is found in the cell inner membrane. Functionally, produces ATP from ADP in the presence of a proton gradient across the membrane. The gamma chain is believed to be important in regulating ATPase activity and the flow of protons through the CF(0) complex. The polypeptide is ATP synthase gamma chain (Rhizobium rhizogenes (strain K84 / ATCC BAA-868) (Agrobacterium radiobacter)).